A 391-amino-acid chain; its full sequence is 3-ketoacyl-CoA thiolase (391 aa).

Cysteine 95 serves as the catalytic Acyl-thioester intermediate. Active-site proton acceptor residues include histidine 347 and cysteine 377.

Belongs to the thiolase-like superfamily. Thiolase family. As to quaternary structure, heterotetramer of two alpha chains (FadB) and two beta chains (FadA).

The protein localises to the cytoplasm. It carries out the reaction an acyl-CoA + acetyl-CoA = a 3-oxoacyl-CoA + CoA. Its pathway is lipid metabolism; fatty acid beta-oxidation. Catalyzes the final step of fatty acid oxidation in which acetyl-CoA is released and the CoA ester of a fatty acid two carbons shorter is formed. This Ectopseudomonas mendocina (strain ymp) (Pseudomonas mendocina) protein is 3-ketoacyl-CoA thiolase.